The primary structure comprises 246 residues: Zinc import ATP-binding protein ZnuC (246 aa).

The ABC transporter domain maps to 24–244; the sequence is LKIENLALAY…TLGEIFSSYI (221 aa). ATP is bound at residue 56–63; the sequence is GPNGGGKT.

Belongs to the ABC transporter superfamily. Zinc importer (TC 3.A.1.15.5) family. As to quaternary structure, the complex is composed of two ATP-binding proteins (ZnuC), two transmembrane proteins (ZnuB) and a solute-binding protein (ZnuA).

The protein resides in the cell membrane. It carries out the reaction Zn(2+)(out) + ATP(in) + H2O(in) = Zn(2+)(in) + ADP(in) + phosphate(in) + H(+)(in). Functionally, part of the ABC transporter complex ZnuABC involved in zinc import. Responsible for energy coupling to the transport system. The sequence is that of Zinc import ATP-binding protein ZnuC from Wolbachia sp. subsp. Brugia malayi (strain TRS).